The sequence spans 287 residues: tRNA uridine(34) hydroxylase (287 aa).

Residues 132–226 (QGRPVVMLDT…YFEEVGGAHY (95 aa)) form the Rhodanese domain. The Cysteine persulfide intermediate role is filled by C186.

The protein belongs to the TrhO family.

The enzyme catalyses uridine(34) in tRNA + AH2 + O2 = 5-hydroxyuridine(34) in tRNA + A + H2O. Catalyzes oxygen-dependent 5-hydroxyuridine (ho5U) modification at position 34 in tRNAs. This is tRNA uridine(34) hydroxylase from Paraburkholderia phytofirmans (strain DSM 17436 / LMG 22146 / PsJN) (Burkholderia phytofirmans).